A 966-amino-acid polypeptide reads, in one-letter code: Muscular LMNA-interacting protein (966 aa).

Phosphoserine is present on S129. Disordered regions lie at residues 132-154 (EDEA…IATR), 182-207 (SHPE…TSEQ), 303-337 (LAPE…SLRS), 354-388 (PSPK…LKSP), 434-562 (IKQT…TRPS), 597-684 (KRTC…TPSL), 785-837 (SMHS…SQLT), and 929-966 (SLRD…DSKE). The required for interaction with ISL1 stretch occupies residues 144–810 (PPGATGNIAT…GSETIKTPTT (667 aa)). 2 stretches are compositionally biased toward polar residues: residues 195–207 (KHGQ…TSEQ) and 325–337 (TSPS…SLRS). Composition is skewed to low complexity over residues 354-387 (PSPK…GLKS), 437-455 (TPST…TGST), and 478-497 (PLSQ…SYAA). S486 carries the phosphoserine modification. A compositionally biased stretch (polar residues) spans 507–521 (TLRSSTTPPQSQTDL). 2 stretches are compositionally biased toward basic and acidic residues: residues 542–555 (GRKD…EKNR) and 597–607 (KRTCSQRHSDQ). Polar residues-rich tracts occupy residues 639–649 (SSLTQALQRSP) and 657–684 (GSAT…TPSL). Residues 785 to 797 (SMHSSDSPSRPSQ) show a composition bias toward low complexity. S791 carries the post-translational modification Phosphoserine. Residues 798–810 (TMLGSETIKTPTT) show a composition bias toward polar residues. The span at 825–834 (SSSSSTTSES) shows a compositional bias: low complexity. The segment covering 937 to 946 (SPTLLSQDTY) has biased composition (polar residues). The span at 957–966 (PEHDTLDSKE) shows a compositional bias: basic and acidic residues.

In terms of assembly, directly interacts with LMNA. Interacts with ISL1 (via N-terminal domain); the interaction represses ISL1 transactivator activity. Interactions of ISL1 with MLIP1 and GCN5/KAT2A may be mutually exclusive. In terms of tissue distribution, expressed in cardiomyoctes. Expression is highly reduced in hypertrophic cardiomyocytes.

It localises to the nucleus. It is found in the nucleus envelope. The protein resides in the PML body. Its subcellular location is the cytoplasm. The protein localises to the cytosol. It localises to the cell membrane. It is found in the sarcolemma. Its function is as follows. Required for myoblast differentiation into myotubes, possibly acting as a transcriptional regulator of the myogenic program. Required for cardiac adaptation to stress through integrated regulation of the AKT/mTOR pathways and FOXO1. Regulates cardiac homeostasis and plays a role in the protection against cardiac hypertrophy. Binds chromatin. May act as a transcriptional cofactor for ISL1, repressing its transcriptional activity. May also repress MYOCD transcriptional activity. The sequence is that of Muscular LMNA-interacting protein from Rattus norvegicus (Rat).